A 50-amino-acid chain; its full sequence is Toxic protein HokE (50 aa).

The helical transmembrane segment at 5-25 threads the bilayer; it reads YALAAVIVLCLTVLGFTLLVG.

Belongs to the Hok/Gef family.

Its subcellular location is the cell inner membrane. Functionally, toxic component of a type I toxin-antitoxin (TA) system; if it expressed it could be neutralized by antisense antitoxin RNA SokE. This Escherichia coli (strain K12) protein is Toxic protein HokE.